The primary structure comprises 307 residues: Taste receptor type 2 member 106 (307 aa).

At 1–7 (MLTIPEG) the chain is on the extracellular side. The chain crosses the membrane as a helical span at residues 8-28 (ILLCFITSGSVLGVLGNGFIL). Residues 29 to 41 (HVNCTDCVRQKFS) lie on the Cytoplasmic side of the membrane. A helical membrane pass occupies residues 42 to 62 (TTGFIFTGLAISRICVICIII). Residues 63-81 (SDGYLKLFSPHMVASDAHI) lie on the Extracellular side of the membrane. Residues 82–104 (IGISYLWIITNHTSTCFATILNL) form a helical membrane-spanning segment. Over 105 to 124 (FYFLKIANFSHYIFFCLKRK) the chain is Cytoplasmic. A helical membrane pass occupies residues 125-145 (LNTIFIFLLGCLFISWSVAFP). Topologically, residues 146 to 179 (QTVKIFNDKMKHRNTSWKFHLHKSKFIINHILLN) are extracellular. N-linked (GlcNAc...) asparagine glycosylation is present at Asn159. Residues 180–200 (LGVIFFCMVAIITSFLLIISL) traverse the membrane as a helical segment. Topologically, residues 201-227 (WKHNRKMQLYVSRFKSLNTEVHLKVMK) are cytoplasmic. Residues 228-248 (VLISFIILLILHVIGILIETL) traverse the membrane as a helical segment. The Extracellular segment spans residues 249–257 (SFLRYENKL). A helical membrane pass occupies residues 258–278 (LLILGLNFSSMYPCCHSFILI). Residues 279–307 (LANNQLKQASLKALKQFKCHKKDKDVRET) are Cytoplasmic-facing.

The protein belongs to the G-protein coupled receptor T2R family.

The protein resides in the membrane. Functionally, putative taste receptor which may play a role in the perception of bitterness. This Rattus norvegicus (Rat) protein is Taste receptor type 2 member 106.